Here is an 810-residue protein sequence, read N- to C-terminus: Sister chromatid cohesion 1 protein 2 (810 aa).

3 disordered regions span residues 200–244 (RDTT…LLEP), 273–315 (SHES…SECG), and 606–626 (MGAS…AETP). Basic and acidic residues-rich tracts occupy residues 220–234 (EPSR…HRED) and 273–310 (SHES…DRSL). The segment covering 606 to 622 (MGASSTTSGTAHQTENA) has biased composition (polar residues).

The protein belongs to the rad21 family. Component of the cohesin complex. In terms of tissue distribution, low expression in shoots, buds, siliques, leaves and roots. Found in, but not limited to, actively dividing cells: in procambium, protoderm and ground meristem in roots, and in shoot and floral meristems.

It is found in the nucleus. In terms of biological role, may be involved in sister chromatid cohesion during mitosis. The chain is Sister chromatid cohesion 1 protein 2 (SYN2) from Arabidopsis thaliana (Mouse-ear cress).